The chain runs to 342 residues: tRNA N6-adenosine threonylcarbamoyltransferase (342 aa).

Fe cation is bound by residues H115 and H119. Substrate is bound by residues 138–142 (LVSGG), D171, G184, and N276. D304 contacts Fe cation.

The protein belongs to the KAE1 / TsaD family. The cofactor is Fe(2+).

It localises to the cytoplasm. The catalysed reaction is L-threonylcarbamoyladenylate + adenosine(37) in tRNA = N(6)-L-threonylcarbamoyladenosine(37) in tRNA + AMP + H(+). Its function is as follows. Required for the formation of a threonylcarbamoyl group on adenosine at position 37 (t(6)A37) in tRNAs that read codons beginning with adenine. Is involved in the transfer of the threonylcarbamoyl moiety of threonylcarbamoyl-AMP (TC-AMP) to the N6 group of A37, together with TsaE and TsaB. TsaD likely plays a direct catalytic role in this reaction. This Dichelobacter nodosus (strain VCS1703A) protein is tRNA N6-adenosine threonylcarbamoyltransferase.